Here is a 37-residue protein sequence, read N- to C-terminus: Large ribosomal subunit protein bL36 (37 aa).

This sequence belongs to the bacterial ribosomal protein bL36 family.

The chain is Large ribosomal subunit protein bL36 from Halothermothrix orenii (strain H 168 / OCM 544 / DSM 9562).